A 358-amino-acid chain; its full sequence is S-adenosylmethionine:tRNA ribosyltransferase-isomerase (358 aa).

Belongs to the QueA family. As to quaternary structure, monomer.

The protein resides in the cytoplasm. The catalysed reaction is 7-aminomethyl-7-carbaguanosine(34) in tRNA + S-adenosyl-L-methionine = epoxyqueuosine(34) in tRNA + adenine + L-methionine + 2 H(+). Its pathway is tRNA modification; tRNA-queuosine biosynthesis. Functionally, transfers and isomerizes the ribose moiety from AdoMet to the 7-aminomethyl group of 7-deazaguanine (preQ1-tRNA) to give epoxyqueuosine (oQ-tRNA). The sequence is that of S-adenosylmethionine:tRNA ribosyltransferase-isomerase from Desulfotalea psychrophila (strain LSv54 / DSM 12343).